Reading from the N-terminus, the 158-residue chain is UPF0145 protein Psyc_1853 (158 aa).

Residues 113–122 show a composition bias toward polar residues; it reads IYQSSNQPPS. Positions 113–158 are disordered; that stretch reads IYQSSNQPPSHHSGHSQYEEPVPSAAQPSTTAQANDDLPRFNPFGE.

The protein belongs to the UPF0145 family.

This Psychrobacter arcticus (strain DSM 17307 / VKM B-2377 / 273-4) protein is UPF0145 protein Psyc_1853.